Here is a 436-residue protein sequence, read N- to C-terminus: Protein translocase subunit SecY (436 aa).

10 helical membrane passes run 18–38 (IAFT…PATG), 69–89 (LLQV…SIIV), 116–138 (YTRY…LART), 154–174 (ILTV…VMWF), 187–207 (MSLL…GQVV), 214–234 (VFAI…FVEE), 266–286 (MANV…GILI), 314–334 (PVYM…YVSI), 375–395 (VVGA…FAVI), and 396–416 (GTSQ…GVGL).

This sequence belongs to the SecY/SEC61-alpha family. Component of the Sec protein translocase complex. Heterotrimer consisting of SecY, SecE and SecG subunits. The heterotrimers can form oligomers, although 1 heterotrimer is thought to be able to translocate proteins. Interacts with the ribosome. Interacts with SecDF, and other proteins may be involved. Interacts with SecA.

It is found in the cell membrane. The central subunit of the protein translocation channel SecYEG. Consists of two halves formed by TMs 1-5 and 6-10. These two domains form a lateral gate at the front which open onto the bilayer between TMs 2 and 7, and are clamped together by SecE at the back. The channel is closed by both a pore ring composed of hydrophobic SecY resides and a short helix (helix 2A) on the extracellular side of the membrane which forms a plug. The plug probably moves laterally to allow the channel to open. The ring and the pore may move independently. The sequence is that of Protein translocase subunit SecY from Micrococcus luteus (Micrococcus lysodeikticus).